Here is a 1380-residue protein sequence, read N- to C-terminus: Receptor-type adenylate cyclase A (1380 aa).

Topologically, residues 1–34 (MAMQIRPSLGGCLRHGGAGDHAARRLSRLRAAKV) are cytoplasmic. A helical transmembrane segment spans residues 35–55 (FVPTAVVCVLLCCAPWVMAEI). The Extracellular portion of the chain corresponds to 56 to 891 (TNDAEREPVY…SHALTPAQRN (836 aa)). 4 N-linked (GlcNAc...) asparagine glycosylation sites follow: N422, N478, N497, and N567. Residues 892 to 912 (GLIAGCVVGAVVLIATCTLLL) traverse the membrane as a helical segment. Residues 913-1380 (YCCMDNRNND…NPHYARHAFE (468 aa)) are Cytoplasmic-facing. The Guanylate cyclase domain maps to 933–1087 (TLLFTDIESS…DTSNMAARTE (155 aa)). D938 and D981 together coordinate Mg(2+). A disordered region spans residues 1270–1298 (LAREGDSAAGGVRPRLPGSPVTSLPAGGS).

It belongs to the adenylyl cyclase class-3 family. Mg(2+) serves as cofactor.

It localises to the membrane. The catalysed reaction is ATP = 3',5'-cyclic AMP + diphosphate. In terms of biological role, could act as a receptor for an unknown ligand. This is Receptor-type adenylate cyclase A (RAC-A) from Leishmania donovani.